Reading from the N-terminus, the 73-residue chain is Large ribosomal subunit protein bL31 (73 aa).

This sequence belongs to the bacterial ribosomal protein bL31 family. Type A subfamily. As to quaternary structure, part of the 50S ribosomal subunit.

In terms of biological role, binds the 23S rRNA. This chain is Large ribosomal subunit protein bL31, found in Allorhizobium ampelinum (strain ATCC BAA-846 / DSM 112012 / S4) (Agrobacterium vitis (strain S4)).